The sequence spans 336 residues: Glyceraldehyde-3-phosphate dehydrogenase 1 (336 aa).

Residues 12-13 (RI), Asp-34, and Arg-79 contribute to the NAD(+) site. Residues 149 to 151 (SCT), Thr-180, 209 to 210 (TG), and Arg-232 contribute to the D-glyceraldehyde 3-phosphate site. Cys-150 (nucleophile) is an active-site residue. Residue Asn-314 coordinates NAD(+).

The protein belongs to the glyceraldehyde-3-phosphate dehydrogenase family. In terms of assembly, homotetramer.

The protein localises to the cytoplasm. The enzyme catalyses D-glyceraldehyde 3-phosphate + phosphate + NAD(+) = (2R)-3-phospho-glyceroyl phosphate + NADH + H(+). Its pathway is carbohydrate degradation; glycolysis; pyruvate from D-glyceraldehyde 3-phosphate: step 1/5. Inhibited by koningic acid through the interaction of cysteine residues with koningic acid even at very low concentrations. In Trichoderma koningii (Hypocrea koningii), this protein is Glyceraldehyde-3-phosphate dehydrogenase 1 (gpd1).